Reading from the N-terminus, the 359-residue chain is DNA-directed RNA polymerase RPB3-11 homolog (359 aa).

In the N-terminal section; belongs to the archaeal RpoD/eukaryotic RPB3 RNA polymerase subunit family. The protein in the C-terminal section; belongs to the archaeal RpoL/eukaryotic RPB11/RPC19 RNA polymerase subunit family. In terms of assembly, part of the viral DNA-directed RNA polymerase that consists of 8 polII-like subunits (RPB1, RPB2, RPB3, RPB5, RPB6, RPB7, RPB9, RPB10), a capping enzyme and a termination factor.

The protein resides in the host cytoplasm. It localises to the virion. In terms of biological role, component of the DNA-directed RNA polymerase (RNAP) that catalyzes the transcription in the cytoplasm of viral DNA into RNA using the four ribonucleoside triphosphates as substrates. The polypeptide is DNA-directed RNA polymerase RPB3-11 homolog (Ornithodoros (relapsing fever ticks)).